The following is a 199-amino-acid chain: Putative ATP-dependent Clp protease proteolytic subunit-like (199 aa).

The protein belongs to the peptidase S14 family. As to quaternary structure, component of the chloroplastic Clp protease core complex.

The protein localises to the plastid. The protein resides in the cyanelle. Functionally, has lost the two conserved residues (Ser and His) proposed to be part of the active site. Therefore it could be inactive. This is Putative ATP-dependent Clp protease proteolytic subunit-like (clpP-B) from Cyanophora paradoxa.